Reading from the N-terminus, the 123-residue chain is Phosphoribosyl-AMP cyclohydrolase (123 aa).

Residue aspartate 76 participates in Mg(2+) binding. Cysteine 77 serves as a coordination point for Zn(2+). The Mg(2+) site is built by aspartate 78 and aspartate 80. The Zn(2+) site is built by cysteine 93 and cysteine 100.

It belongs to the PRA-CH family. Homodimer. The cofactor is Mg(2+). It depends on Zn(2+) as a cofactor.

It localises to the cytoplasm. The catalysed reaction is 1-(5-phospho-beta-D-ribosyl)-5'-AMP + H2O = 1-(5-phospho-beta-D-ribosyl)-5-[(5-phospho-beta-D-ribosylamino)methylideneamino]imidazole-4-carboxamide. Its pathway is amino-acid biosynthesis; L-histidine biosynthesis; L-histidine from 5-phospho-alpha-D-ribose 1-diphosphate: step 3/9. Its function is as follows. Catalyzes the hydrolysis of the adenine ring of phosphoribosyl-AMP. In Methanocorpusculum labreanum (strain ATCC 43576 / DSM 4855 / Z), this protein is Phosphoribosyl-AMP cyclohydrolase.